The following is a 258-amino-acid chain: Large ribosomal subunit protein bL21 (258 aa).

Basic and acidic residues predominate over residues 140–159 (KAKDAKDEAPKAAPKAEKKK). Positions 140–181 (KAKDAKDEAPKAAPKAEKKKAAPKKAKAEAAPAAADEGTRPA) are disordered.

It belongs to the bacterial ribosomal protein bL21 family. In terms of assembly, part of the 50S ribosomal subunit. Contacts protein L20.

This protein binds to 23S rRNA in the presence of protein L20. This Jannaschia sp. (strain CCS1) protein is Large ribosomal subunit protein bL21.